A 771-amino-acid polypeptide reads, in one-letter code: Kojibiose phosphorylase (771 aa).

358-359 (WD) contacts substrate. Glutamate 498 serves as the catalytic Proton donor. 611–612 (KQ) contributes to the substrate binding site.

It belongs to the glycosyl hydrolase 65 family.

It catalyses the reaction kojibiose + phosphate = beta-D-glucose 1-phosphate + D-glucose. Catalyzes the reversible phosphorolysis of kojibiose into beta-D-glucose 1-phosphate (Glc1P) and D-glucose. In Caldanaerobacter subterraneus subsp. tengcongensis (strain DSM 15242 / JCM 11007 / NBRC 100824 / MB4) (Thermoanaerobacter tengcongensis), this protein is Kojibiose phosphorylase (kojP).